A 207-amino-acid polypeptide reads, in one-letter code: Protein DMP1 (207 aa).

The interval 1–20 (MSETSLLIPKTNSPASSENM) is disordered. A run of 4 helical transmembrane segments spans residues 33–53 (LIKLLPTGTLFIYLLLNPVLT), 64–84 (VMSSILVALCSFSCVFSCFTD), 121–141 (IADFVHAGFVLAVFGTLVLLD), and 159–179 (LVMALPPAVGVASATIFALFP).

This sequence belongs to the plant DMP1 protein family. Expressed in leaves, siliques and roots.

Its subcellular location is the endoplasmic reticulum membrane. The protein resides in the vacuole membrane. Its function is as follows. Involved in membrane remodeling including fission during breakdown of the endoplasmic reticulum (ER) and the tonoplast during leaf senescence and in membrane fusion during vacuole biogenesis in roots. The sequence is that of Protein DMP1 from Arabidopsis thaliana (Mouse-ear cress).